A 428-amino-acid polypeptide reads, in one-letter code: Histidine--tRNA ligase (428 aa).

This sequence belongs to the class-II aminoacyl-tRNA synthetase family. Homodimer.

It is found in the cytoplasm. The enzyme catalyses tRNA(His) + L-histidine + ATP = L-histidyl-tRNA(His) + AMP + diphosphate + H(+). The protein is Histidine--tRNA ligase of Sorangium cellulosum (strain So ce56) (Polyangium cellulosum (strain So ce56)).